Consider the following 131-residue polypeptide: Profilin-4 (131 aa).

A disulfide bridge links Cys13 with Cys115. Positions 81–97 (AVIRGKKGAGGITVKKT) match the Involved in PIP2 interaction motif. Thr111 carries the phosphothreonine modification.

It belongs to the profilin family. Occurs in many kinds of cells as a complex with monomeric actin in a 1:1 ratio. Post-translationally, phosphorylated by MAP kinases.

Its subcellular location is the cytoplasm. The protein resides in the cytoskeleton. In terms of biological role, binds to actin and affects the structure of the cytoskeleton. At high concentrations, profilin prevents the polymerization of actin, whereas it enhances it at low concentrations. The protein is Profilin-4 of Olea europaea (Common olive).